Here is a 442-residue protein sequence, read N- to C-terminus: Protein bag of marbles (442 aa).

Residues 201 to 250 (FDMPVKSTMPKSLNVRYQLQVLCTKVERFLVQQRRTLEANRHFDFEKYDE) form a required for interaction with ubiquitin region. Residues 408–442 (VSMEQPSASEEEFEETEEVPSSPPRHTGRVPRFRS) are disordered. Acidic residues predominate over residues 416-425 (SEEEFEETEE). Basic residues predominate over residues 433–442 (HTGRVPRFRS).

Interacts (via central region) with ubiquitin. Interacts (via C-terminus) with otu (via OTU domain); the interaction enhances otu aggregation into amyloid-like structures and enhances its deubiquitinase activity. Together with otu interacts with CycA/cyclin-A (via C-terminus); the interaction stabilizes CycA by promoting and enhancing otu dependent deubiquitination of CycA. Together with otu interacts with Traf6. Part of a complex composed of at least tut, bam and bgcn; complex formation does not require RNA. Interacts (via C-terminus) with bgcn; the interaction is direct and is not disrupted by eIF4A. Interacts with eIF4A (via multiple contacts); the interaction is direct and is not disrupted by bgcn. Interacts (via N-terminus) with tut; the interaction is direct and mediates the interaction between tut and bgcn. As part of the bam-bgcn-tut complex associates with twin; may recruit the CCR4-NOT1 deadenylation complex to mRNA 3'-UTRs to mediate post-transcriptional regulation of expression. Part of a complex composed of at least mei-P26, bam, bgcn and Sxl; this complex is involved in translational repression of nanos mRNA. Post-translationally, ubiquitinated (C-terminal region). As to expression, in cystoblasts and/or very early cystocytes in testis (at protein level); expression levels are regulated by mei-P26. In cystoblasts and/or very early cystocytes in ovary. Expressed in the gut; expression levels increase with age.

It is found in the cytoplasm. Regulatory component of a deubiquitinase complex consisting of bam and otu. The complex deubiquitinates K63-linked polyubiquitinated proteins, antagonizing the ubiquitination activity of Traf6 and regulating the IMD immune signaling pathway. Otu-bam deubiquitinase activity is regulated by Traf6 dependent immune signaling regulation of bam expression levels; this forms a feedback loop that regulates the IMD immune signaling pathway and balances gut immune activity during aging. The complex deubiquitinates and stabilizes CycA/cyclin-A to regulate CycA-dependent differentiation. Required to initiate both male and female gametogenesis. Part of a complex with bgcn involved in 3'-UTR-dependent translational repression of a subset of mRNAs, including those for mei-P26, nanos and shg/E-cadherin. Repression of mei-P26 is targeted by let-7 miRNA. Involved in a regulatory cascade with mei-P26 to control the progression of cystocytes through transit amplification and the switch to spermatocyte differentiation; mei-P26 facilitates bam accumulation, which in turn represses translation of mei-P26. Forms a complex with tut and bgcn involved in 3'-UTR-dependent post-transcriptional repression of several 3'-RNA processing factors, which promotes germline stem cell lineage differentiation and mitosis-to-meiosis transition. This Drosophila melanogaster (Fruit fly) protein is Protein bag of marbles.